Here is a 208-residue protein sequence, read N- to C-terminus: MHIIIAGIDTEVGKTFVSAILATLFQAEYWKPIQSGSLDRSDSTIVRELSGAVCHRETYRLTHPLAAHQAARVDNIPIHAENFSLPVTEAPLIIETSGGFLSPCSQDSLQGDVFSKWPCQWVLVSKAYLGSINHTCLTVEAMRTRNLNILGMVLNQYPKEEEDWLLNMTGIPYLGRLNYENIISKETVKNYANLWKETWEDREAKLCS.

11–16 (EVGKTF) is a binding site for ATP. Residue threonine 15 participates in Mg(2+) binding. Residue lysine 31 is part of the active site. Serine 35 provides a ligand contact to substrate. ATP contacts are provided by residues aspartate 42, 95–98 (ETSG), and 155–156 (NQ). 2 residues coordinate Mg(2+): aspartate 42 and glutamate 95.

This sequence belongs to the dethiobiotin synthetase family. In terms of assembly, homodimer. The cofactor is Mg(2+).

It is found in the cytoplasm. It carries out the reaction (7R,8S)-7,8-diammoniononanoate + CO2 + ATP = (4R,5S)-dethiobiotin + ADP + phosphate + 3 H(+). It functions in the pathway cofactor biosynthesis; biotin biosynthesis; biotin from 7,8-diaminononanoate: step 1/2. Its function is as follows. Catalyzes a mechanistically unusual reaction, the ATP-dependent insertion of CO2 between the N7 and N8 nitrogen atoms of 7,8-diaminopelargonic acid (DAPA, also called 7,8-diammoniononanoate) to form a ureido ring. The sequence is that of ATP-dependent dethiobiotin synthetase BioD from Chlamydia felis (strain Fe/C-56) (Chlamydophila felis).